Consider the following 295-residue polypeptide: Thioredoxin-related transmembrane protein 2 (295 aa).

Positions 1–48 (MAVLAPLIALVYSVPRLSRWLARPYCLLSALLSIAFLLVRKLPPICNG) are cleaved as a signal peptide. The Extracellular portion of the chain corresponds to 49–102 (LPTQREDGNPCDFDWREVEILMFLSAIVMMKNRRSITVEQHVGNIFMFSKVANA). A helical transmembrane segment spans residues 103–125 (ILFFRLDIRMGLLYLTLCIVFLM). The 156-residue stretch at 114 to 269 (LLYLTLCIVF…LYQRAKKLSK (156 aa)) folds into the Thioredoxin domain. Residues 126–295 (TCKPPLYMGP…VPDGENKKDK (170 aa)) lie on the Cytoplasmic side of the membrane. Ser211 and Ser243 each carry phosphoserine. The disordered stretch occupies residues 266–295 (KLSKGGDMSEEKPGNPTPTAVPDGENKKDK). A Di-lysine motif motif is present at residues 292–295 (KKDK).

Monomer. Homodimer; disulfide-linked. Occurs in both reduced and oxidized monomeric form. Oxidative conditions increase homodimerization. Interacts with CANX. Interacts with ATP2A2.

Its subcellular location is the endoplasmic reticulum membrane. It is found in the mitochondrion membrane. In terms of biological role, endoplasmic reticulum and mitochondria-associated protein that probably functions as a regulator of cellular redox state and thereby regulates protein post-translational modification, protein folding and mitochondrial activity. Indirectly regulates neuronal proliferation, migration, and organization in the developing brain. The chain is Thioredoxin-related transmembrane protein 2 (Tmx2) from Rattus norvegicus (Rat).